The chain runs to 305 residues: Ribonuclease BN (305 aa).

Zn(2+) contacts are provided by H64, H66, D68, H69, H141, D212, and H270. The active-site Proton acceptor is the D68.

The protein belongs to the RNase Z family. RNase BN subfamily. Homodimer. Requires Zn(2+) as cofactor.

Its function is as follows. Zinc phosphodiesterase, which has both exoribonuclease and endoribonuclease activities. The sequence is that of Ribonuclease BN from Escherichia coli O6:K15:H31 (strain 536 / UPEC).